The following is a 160-amino-acid chain: Crossover junction endodeoxyribonuclease RuvC (160 aa).

Residues Asp7, Glu70, and Asp142 contribute to the active site. Asp7, Glu70, and Asp142 together coordinate Mg(2+).

This sequence belongs to the RuvC family. As to quaternary structure, homodimer which binds Holliday junction (HJ) DNA. The HJ becomes 2-fold symmetrical on binding to RuvC with unstacked arms; it has a different conformation from HJ DNA in complex with RuvA. In the full resolvosome a probable DNA-RuvA(4)-RuvB(12)-RuvC(2) complex forms which resolves the HJ. Requires Mg(2+) as cofactor.

Its subcellular location is the cytoplasm. It catalyses the reaction Endonucleolytic cleavage at a junction such as a reciprocal single-stranded crossover between two homologous DNA duplexes (Holliday junction).. Functionally, the RuvA-RuvB-RuvC complex processes Holliday junction (HJ) DNA during genetic recombination and DNA repair. Endonuclease that resolves HJ intermediates. Cleaves cruciform DNA by making single-stranded nicks across the HJ at symmetrical positions within the homologous arms, yielding a 5'-phosphate and a 3'-hydroxyl group; requires a central core of homology in the junction. The consensus cleavage sequence is 5'-(A/T)TT(C/G)-3'. Cleavage occurs on the 3'-side of the TT dinucleotide at the point of strand exchange. HJ branch migration catalyzed by RuvA-RuvB allows RuvC to scan DNA until it finds its consensus sequence, where it cleaves and resolves the cruciform DNA. The protein is Crossover junction endodeoxyribonuclease RuvC of Ehrlichia ruminantium (strain Gardel).